Consider the following 771-residue polypeptide: DNA helicase/primase complex-associated protein (771 aa).

This sequence belongs to the herpesviridae HEPA family. Associates with the primase and the helicase to form the helicase-primase complex. Interacts with the origin-binding protein. Interacts with the polymerase catalytic subunit.

It localises to the host nucleus. Component of the helicase/primase complex. Unwinds the DNA at the replication forks and generates single-stranded DNA for both leading and lagging strand synthesis. The primase synthesizes short RNA primers on the lagging strand that the polymerase presumably elongates using dNTPs. The primase-associated factor has no known catalytic activity in the complex and may serve to facilitate the formation of the replisome by directly interacting with the origin-binding protein and the polymerase. The protein is DNA helicase/primase complex-associated protein of Varicella-zoster virus (strain Oka vaccine) (HHV-3).